The following is a 408-amino-acid chain: Elongation factor Tu (408 aa).

Residues 10 to 219 (KTHVNVGTIG…ALDTYIPDPV (210 aa)) enclose the tr-type G domain. Residues 19 to 26 (GHVDHGKT), 88 to 92 (DCPGH), and 143 to 146 (NKCD) each bind GTP. Thr26 contacts Mg(2+).

Belongs to the TRAFAC class translation factor GTPase superfamily. Classic translation factor GTPase family. EF-Tu/EF-1A subfamily. As to quaternary structure, monomer.

The protein resides in the cytoplasm. The catalysed reaction is GTP + H2O = GDP + phosphate + H(+). Its function is as follows. GTP hydrolase that promotes the GTP-dependent binding of aminoacyl-tRNA to the A-site of ribosomes during protein biosynthesis. This is Elongation factor Tu from Brachyspira hyodysenteriae (strain ATCC 49526 / WA1).